The primary structure comprises 444 residues: 23S rRNA (uracil(1939)-C(5))-methyltransferase RlmD (444 aa).

The region spanning 5-67 (RNRLDRTPFQ…RHFDEAKTVE (63 aa)) is the TRAM domain. 4 residues coordinate [4Fe-4S] cluster: Cys80, Cys86, Cys89, and Cys168. S-adenosyl-L-methionine contacts are provided by Gln276, Phe305, Asn310, Glu326, Asp353, and Asp374. Residue Cys400 is the Nucleophile of the active site.

Belongs to the class I-like SAM-binding methyltransferase superfamily. RNA M5U methyltransferase family. RlmD subfamily.

The enzyme catalyses uridine(1939) in 23S rRNA + S-adenosyl-L-methionine = 5-methyluridine(1939) in 23S rRNA + S-adenosyl-L-homocysteine + H(+). Functionally, catalyzes the formation of 5-methyl-uridine at position 1939 (m5U1939) in 23S rRNA. This is 23S rRNA (uracil(1939)-C(5))-methyltransferase RlmD from Xanthomonas euvesicatoria pv. vesicatoria (strain 85-10) (Xanthomonas campestris pv. vesicatoria).